Here is a 2383-residue protein sequence, read N- to C-terminus: Reducing polyketide synthase rdc5 (2383 aa).

Residues 10–438 (RAPIAIIGMS…GTNAHLVLER (429 aa)) enclose the Ketosynthase family 3 (KS3) domain. Active-site for beta-ketoacyl synthase activity residues include Cys186, His321, and His361. The interval 550 to 881 (FVFTGQGAQW…GFAAELFRRG (332 aa)) is malonyl-CoA:ACP transacylase (MAT) domain. Residues 930–1066 (KSLIGAERPS…GLFSINYEDS (137 aa)) form an N-terminal hotdog fold region. Residues 930 to 1253 (KSLIGAERPS…LAELEVEDAD (324 aa)) enclose the PKS/mFAS DH domain. Residues 932-1250 (LIGAERPSLD…DFHLAELEVE (319 aa)) are dehydratase (DH) domain. His962 functions as the Proton acceptor; for dehydratase activity in the catalytic mechanism. The tract at residues 1094–1253 (VEVISKQAFY…LAELEVEDAD (160 aa)) is C-terminal hotdog fold. Catalysis depends on Asp1160, which acts as the Proton donor; for dehydratase activity. The interval 1663–1977 (GLLNTLHFVS…QGKHVGKMIL (315 aa)) is enoyl reductase (ER) domain. Cys1776 functions as the Phosphocysteine intermediate in the catalytic mechanism. The segment at 2002 to 2182 (ATYLFIGGLG…VSVNLGIMRD (181 aa)) is ketoreductase (KR) domain. The Carrier domain occupies 2300-2377 (AAGPIITKAL…QFAVQIAKKS (78 aa)). Ser2337 is modified (O-(pantetheine 4'-phosphoryl)serine).

Its pathway is secondary metabolite biosynthesis. In terms of biological role, reducing polyketide synthase; part of the gene cluster that mediates the biosynthesis of radicicol, a resorcylic acid lactone (RAL) that irreversibly inhibits the HSP90 molecular chaperone, an important target for cancer chemotherapy. The radicicol cluster encodes only two apparent post-PKS enzymes, a cytochrome P450 monooxygenase (rdc4) and a non-heme halogenase (rdc2) that could introduce the epoxide and the chlorine, respectively. If this cluster includes all the genes required for radicicol biosynthesis, the remaining structural features of radicicol are presumably generated by the PKSs rdc1 and rdc5. The C-2' ketone could arise if the R-PKS rdc5 and NR-PKS rdc1 each carry out four iterations, in contrast to the five iteration-three iteration split for the hypothemycin PKSs. The origin of the cis 5',6' double bond is not known. The radicicol R-PKS rdc5 ER domain may catalyze either double bond isomerization or reduction in the third iteration. In Metacordyceps chlamydosporia (Nematophagous fungus), this protein is Reducing polyketide synthase rdc5.